The primary structure comprises 177 residues: Inorganic pyrophosphatase (177 aa).

Residues Lys31, Arg45, and Tyr57 each coordinate substrate. Residues Asp67, Asp72, and Asp104 each contribute to the Mg(2+) site. Tyr142 contributes to the substrate binding site.

This sequence belongs to the PPase family. In terms of assembly, homohexamer. It depends on Mg(2+) as a cofactor.

The protein resides in the cytoplasm. It catalyses the reaction diphosphate + H2O = 2 phosphate + H(+). Catalyzes the hydrolysis of inorganic pyrophosphate (PPi) forming two phosphate ions. In Neisseria meningitidis serogroup A / serotype 4A (strain DSM 15465 / Z2491), this protein is Inorganic pyrophosphatase.